The chain runs to 1707 residues: Chromatin-remodeling ATPase INO80 (1707 aa).

Disordered stretches follow at residues 1-315 (MSTS…DQER), 398-429 (KVQA…NNME), 454-543 (AQRA…PALM), 673-702 (NERE…REAN), and 729-761 (DEVE…EGTA). Residues 15–44 (PRQQSQTEIRSILNPSTTSTGAHPSFNQYH) are compositionally biased toward polar residues. Positions 61–75 (STTPSTLGLSLGTPL) are enriched in low complexity. Basic and acidic residues predominate over residues 78-89 (SERDIGYPRDQK). The segment covering 90–100 (PTSNYYDPTSD) has biased composition (polar residues). Residues 101–126 (SSERRPATAESKWSDREAKTSQRRDS) show a composition bias toward basic and acidic residues. At Thr-178 the chain carries Phosphothreonine. The span at 237-247 (EPTPKPQPTPT) shows a compositional bias: pro residues. Positions 266-281 (PEPSSAPSSRQSSVAP) are enriched in low complexity. Positions 369-470 (TNKMAKRLEK…AQQTKQILAR (102 aa)) form a coiled coil. Positions 505–515 (KPKRGGARPRK) are enriched in basic residues. Residues 516–526 (SKEQKQAEKDS) show a composition bias toward basic and acidic residues. A DBINO domain is found at 603–728 (IWKDLARKEV…SHFIGKKIKT (126 aa)). Over residues 729-756 (DEVERSTDHPDVAVPDKADHAKPDHGDL) the composition is skewed to basic and acidic residues. The 173-residue stretch at 853-1025 (VNLYEQGING…WALLHFIMPS (173 aa)) folds into the Helicase ATP-binding domain. 866 to 873 (DEMGLGKT) contacts ATP. The DEAQ box motif lies at 976 to 979 (DEAQ). One can recognise a Helicase C-terminal domain in the interval 1426–1586 (KLDSLLTKLK…GVDFNTRSKE (161 aa)). The disordered stretch occupies residues 1610–1707 (AEQLRYEAEN…AMADGDVDMA (98 aa)). Basic and acidic residues predominate over residues 1643 to 1656 (DLYHEGEGHFDDGS).

This sequence belongs to the SNF2/RAD54 helicase family. In terms of assembly, component of the INO80 chromatin-remodeling complex.

The protein localises to the nucleus. It catalyses the reaction ATP + H2O = ADP + phosphate + H(+). Its function is as follows. ATPase component of the INO80 complex which remodels chromatin by shifting nucleosomes and is involved in DNA repair. The chain is Chromatin-remodeling ATPase INO80 (INO80) from Sclerotinia sclerotiorum (strain ATCC 18683 / 1980 / Ss-1) (White mold).